Reading from the N-terminus, the 101-residue chain is Small ribosomal subunit protein uS14 (101 aa).

This sequence belongs to the universal ribosomal protein uS14 family. As to quaternary structure, part of the 30S ribosomal subunit. Contacts proteins S3 and S10.

Functionally, binds 16S rRNA, required for the assembly of 30S particles and may also be responsible for determining the conformation of the 16S rRNA at the A site. The protein is Small ribosomal subunit protein uS14 of Haemophilus influenzae (strain 86-028NP).